Reading from the N-terminus, the 604-residue chain is Sulfite reductase [NADPH] flavoprotein alpha-component (604 aa).

The 139-residue stretch at 66 to 204 folds into the Flavodoxin-like domain; that stretch reads VTVLSASQTG…SANAWTDNIA (139 aa). Residues 72–77, 119–122, and 155–164 contribute to the FMN site; these read SQTGNA, STQG, and LGDSSYPNFC. In terms of domain architecture, FAD-binding FR-type spans 239 to 453; sequence AAPFPAALLA…VERNDGFRLP (215 aa). FAD-binding positions include Thr-327, Gln-361, 391–394, 409–411, and 424–427; these read RLYS, TVG, and GGAS. NADP(+) is bound by residues 524–525, 530–534, and Asp-566; these read SR and KIYVQ. Tyr-604 is an FAD binding site.

This sequence belongs to the NADPH-dependent sulphite reductase flavoprotein subunit CysJ family. In the N-terminal section; belongs to the flavodoxin family. The protein in the C-terminal section; belongs to the flavoprotein pyridine nucleotide cytochrome reductase family. As to quaternary structure, alpha(8)-beta(8). The alpha component is a flavoprotein, the beta component is a hemoprotein. Requires FAD as cofactor. FMN is required as a cofactor.

It carries out the reaction hydrogen sulfide + 3 NADP(+) + 3 H2O = sulfite + 3 NADPH + 4 H(+). Its pathway is sulfur metabolism; hydrogen sulfide biosynthesis; hydrogen sulfide from sulfite (NADPH route): step 1/1. Its function is as follows. Component of the sulfite reductase complex that catalyzes the 6-electron reduction of sulfite to sulfide. This is one of several activities required for the biosynthesis of L-cysteine from sulfate. The flavoprotein component catalyzes the electron flow from NADPH -&gt; FAD -&gt; FMN to the hemoprotein component. The protein is Sulfite reductase [NADPH] flavoprotein alpha-component of Neisseria meningitidis serogroup B (strain ATCC BAA-335 / MC58).